The sequence spans 201 residues: Small ribosomal subunit protein uS4 (201 aa).

A disordered region spans residues 26–46; that stretch reads LARRAYAPGDHGRDRRGKLSE. A compositionally biased stretch (basic and acidic residues) spans 35-44; the sequence is DHGRDRRGKL. Positions 93–156 constitute an S4 RNA-binding domain; sequence RRLDNMVYRL…KNLDIIKNAV (64 aa).

This sequence belongs to the universal ribosomal protein uS4 family. As to quaternary structure, part of the 30S ribosomal subunit. Contacts protein S5. The interaction surface between S4 and S5 is involved in control of translational fidelity.

In terms of biological role, one of the primary rRNA binding proteins, it binds directly to 16S rRNA where it nucleates assembly of the body of the 30S subunit. Functionally, with S5 and S12 plays an important role in translational accuracy. This is Small ribosomal subunit protein uS4 from Limosilactobacillus reuteri (strain DSM 20016) (Lactobacillus reuteri).